A 118-amino-acid chain; its full sequence is Large ribosomal subunit protein bL12 (118 aa).

Methionine 1 bears the N-acetylmethionine; in form MA2 mark.

It belongs to the bacterial ribosomal protein bL12 family. Homodimer. Part of the ribosomal stalk of the 50S ribosomal subunit. Forms a multimeric L10(L12)X complex, where L10 forms an elongated spine to which 2 to 4 L12 dimers bind in a sequential fashion. Binds GTP-bound translation factors. Acetylation of Met-1 converts MA1 to MA2.

Its function is as follows. Forms part of the ribosomal stalk which helps the ribosome interact with GTP-bound translation factors. Is thus essential for accurate translation. This Micrococcus luteus (Micrococcus lysodeikticus) protein is Large ribosomal subunit protein bL12.